The following is a 235-amino-acid chain: 15,16-dihydrobiliverdin:ferredoxin oxidoreductase (235 aa).

It belongs to the HY2 family.

It catalyses the reaction 15,16-dihydrobiliverdin + oxidized 2[4Fe-4S]-[ferredoxin] = biliverdin IXalpha + reduced 2[4Fe-4S]-[ferredoxin] + 2 H(+). Functionally, catalyzes the two-electron reduction of biliverdin IX-alpha at the C15 methine bridge. This chain is 15,16-dihydrobiliverdin:ferredoxin oxidoreductase, found in Synechococcus sp. (strain CC9902).